A 70-amino-acid chain; its full sequence is Small ribosomal subunit protein bS18 (70 aa).

The protein belongs to the bacterial ribosomal protein bS18 family. As to quaternary structure, part of the 30S ribosomal subunit. Forms a tight heterodimer with protein bS6.

In terms of biological role, binds as a heterodimer with protein bS6 to the central domain of the 16S rRNA, where it helps stabilize the platform of the 30S subunit. The polypeptide is Small ribosomal subunit protein bS18 (Salinibacter ruber (strain DSM 13855 / M31)).